The primary structure comprises 447 residues: UDP-N-acetylglucosamine 1-carboxyvinyltransferase (447 aa).

Phosphoenolpyruvate is bound at residue 27–28 (KN). Arg97 contacts UDP-N-acetyl-alpha-D-glucosamine. Residue Cys121 is the Proton donor of the active site. At Cys121 the chain carries 2-(S-cysteinyl)pyruvic acid O-phosphothioketal. Residues 126–130 (RPVDL), Asp314, and Val336 each bind UDP-N-acetyl-alpha-D-glucosamine.

It belongs to the EPSP synthase family. MurA subfamily.

The protein resides in the cytoplasm. It catalyses the reaction phosphoenolpyruvate + UDP-N-acetyl-alpha-D-glucosamine = UDP-N-acetyl-3-O-(1-carboxyvinyl)-alpha-D-glucosamine + phosphate. It functions in the pathway cell wall biogenesis; peptidoglycan biosynthesis. Its function is as follows. Cell wall formation. Adds enolpyruvyl to UDP-N-acetylglucosamine. The chain is UDP-N-acetylglucosamine 1-carboxyvinyltransferase from Nostoc sp. (strain PCC 7120 / SAG 25.82 / UTEX 2576).